The following is a 307-amino-acid chain: 2,4-diacetylphloroglucinol hydrolase (307 aa).

Zn(2+) is bound by residues H142, E173, H283, and E287.

The protein belongs to the DAPG/phloretin hydrolase family. Zn(2+) is required as a cofactor.

It catalyses the reaction 2,4-diacetylphloroglucinol + H2O = 2-acetylphloroglucinol + acetate. Activity is strongly reduced by pyoluteorin, an antifungal compound produced by the bacterium. Its function is as follows. Hydrolase that specifically degrades the potent antimicrobial compound 2,4-diacetylphloroglucinol (DAPG) to equimolar amounts of mildly toxic monoacetylphloroglucinol (MAPG) and acetate. Does not degrade other compounds with structures similar to DAPG, such as MAPG and triacetylphloroglucinol, suggesting strict substrate specificity. Degradation of DAPG to MAPG may provide an additional means of fine-tuning levels of this antibiotic or may help avoid accumulation of a metabolite that at high levels may become toxic to the producing bacterium. This is 2,4-diacetylphloroglucinol hydrolase from Pseudomonas protegens (strain DSM 19095 / LMG 27888 / CFBP 6595 / CHA0).